Here is a 226-residue protein sequence, read N- to C-terminus: Pre-mRNA-splicing factor SPF27 (226 aa).

Ala-2 carries the N-acetylalanine modification. Phosphoserine is present on Ser-94. Residues 139 to 223 are a coiled coil; the sequence is YNENLVHMIE…HGEANKENIR (85 aa).

It belongs to the SPF27 family. As to quaternary structure, component of the pre-catalytic and catalytic spliceosome complexes. Component of the postcatalytic spliceosome P complex. Component of the PRP19-CDC5L splicing complex composed of a core complex comprising a homotetramer of PRPF19, CDC5L, PLRG1 and BCAS2, and at least three less stably associated proteins CTNNBL1, CWC15 and HSPA8. Interacts directly in the complex with PRPF19, CDC5L and PLRG1.

Its subcellular location is the nucleus. The protein localises to the nucleolus. In terms of biological role, required for pre-mRNA splicing as component of the activated spliceosome. Component of the PRP19-CDC5L complex that forms an integral part of the spliceosome and is required for activating pre-mRNA splicing. May have a scaffolding role in the spliceosome assembly as it contacts all other components of the core complex. The PRP19-CDC5L complex may also play a role in the response to DNA damage (DDR). The sequence is that of Pre-mRNA-splicing factor SPF27 (BCAS2) from Pongo abelii (Sumatran orangutan).